A 258-amino-acid polypeptide reads, in one-letter code: Pro-thyrotropin-releasing hormone-A (258 aa).

The first 22 residues, 1–22 (MKSACLIILASLVVCNLTLARG), serve as a signal peptide directing secretion. Residue glutamine 78 is modified to Pyrrolidone carboxylic acid. Proline 80 carries the post-translational modification Proline amide. Basic and acidic residues-rich tracts occupy residues 84–98 (YQEE…GKRE) and 107–119 (EVQK…KRED). A disordered region spans residues 84–124 (YQEELEKRQHPGKREEDEDEDYDEVQKRQHPGKREDEFDSF). Glutamine 92 is subject to Pyrrolidone carboxylic acid. Proline 94 bears the Proline amide mark. At glutamine 112 the chain carries Pyrrolidone carboxylic acid. A Proline amide modification is found at proline 114. Pyrrolidone carboxylic acid is present on glutamine 131. Proline 133 bears the Proline amide mark. Glutamine 156 bears the Pyrrolidone carboxylic acid mark. Residue proline 158 is modified to Proline amide. Disordered stretches follow at residues 166–215 (YSKR…PCDV) and 236–258 (SRAE…TEQE). Glutamine 170 carries the pyrrolidone carboxylic acid modification. Proline 172 carries the post-translational modification Proline amide. Residues 184–193 (GDLRELEKRQ) are compositionally biased toward basic and acidic residues. A Pyrrolidone carboxylic acid modification is found at glutamine 193. At proline 195 the chain carries Proline amide. Residue glutamine 242 is modified to Pyrrolidone carboxylic acid. At proline 244 the chain carries Proline amide.

Belongs to the TRH family.

The protein resides in the secreted. Functionally, functions as a regulator of the biosynthesis of TSH in the anterior pituitary gland and as a neurotransmitter/ neuromodulator in the central and peripheral nervous systems. This chain is Pro-thyrotropin-releasing hormone-A (trha), found in Oncorhynchus nerka (Sockeye salmon).